The chain runs to 101 residues: MDKSKRLFLKPKRSLRRRLPPIGSGDRIDYRNMSLISRFISEQGKILSRRVNRLTLKQQRLITIAIKQARILSSLPFLNNERQFEKNELVARTTGLRTRKK.

The protein belongs to the bacterial ribosomal protein bS18 family. As to quaternary structure, part of the 30S ribosomal subunit.

The protein resides in the plastid. It is found in the chloroplast. In Populus alba (White poplar), this protein is Small ribosomal subunit protein bS18c.